A 146-amino-acid polypeptide reads, in one-letter code: Hemoglobin subunit beta (146 aa).

Residues 2 to 146 enclose the Globin domain; it reads QWTAEEKQLI…VAHALARKYH (145 aa). Heme b-binding residues include His-63 and His-92.

The protein belongs to the globin family. In terms of assembly, heterotetramer of two alpha chains and two beta chains. In terms of tissue distribution, red blood cells.

Its function is as follows. Involved in oxygen transport from the lung to the various peripheral tissues. In Passer montanus (Eurasian tree sparrow), this protein is Hemoglobin subunit beta (HBB).